The sequence spans 313 residues: N-acetyl-gamma-glutamyl-phosphate reductase (313 aa).

The active site involves Cys117.

It belongs to the NAGSA dehydrogenase family. Type 2 subfamily.

It localises to the cytoplasm. The enzyme catalyses N-acetyl-L-glutamate 5-semialdehyde + phosphate + NADP(+) = N-acetyl-L-glutamyl 5-phosphate + NADPH + H(+). It functions in the pathway amino-acid biosynthesis; L-arginine biosynthesis; N(2)-acetyl-L-ornithine from L-glutamate: step 3/4. Catalyzes the NADPH-dependent reduction of N-acetyl-5-glutamyl phosphate to yield N-acetyl-L-glutamate 5-semialdehyde. In Burkholderia orbicola (strain MC0-3), this protein is N-acetyl-gamma-glutamyl-phosphate reductase.